The primary structure comprises 398 residues: Dual-specificity RNA methyltransferase RlmN (398 aa).

The active-site Proton acceptor is the Glu-100. The Radical SAM core domain maps to 106–345; it reads DGDRGTLCVS…TTVRTTRGDD (240 aa). Cysteines 113 and 350 form a disulfide. Residues Cys-120, Cys-124, and Cys-127 each contribute to the [4Fe-4S] cluster site. Residues 174 to 175, Ser-206, 228 to 230, and Asn-307 each bind S-adenosyl-L-methionine; these read GE and SLH. The active-site S-methylcysteine intermediate is the Cys-350.

This sequence belongs to the radical SAM superfamily. RlmN family. Requires [4Fe-4S] cluster as cofactor.

Its subcellular location is the cytoplasm. It carries out the reaction adenosine(2503) in 23S rRNA + 2 reduced [2Fe-2S]-[ferredoxin] + 2 S-adenosyl-L-methionine = 2-methyladenosine(2503) in 23S rRNA + 5'-deoxyadenosine + L-methionine + 2 oxidized [2Fe-2S]-[ferredoxin] + S-adenosyl-L-homocysteine. It catalyses the reaction adenosine(37) in tRNA + 2 reduced [2Fe-2S]-[ferredoxin] + 2 S-adenosyl-L-methionine = 2-methyladenosine(37) in tRNA + 5'-deoxyadenosine + L-methionine + 2 oxidized [2Fe-2S]-[ferredoxin] + S-adenosyl-L-homocysteine. Functionally, specifically methylates position 2 of adenine 2503 in 23S rRNA and position 2 of adenine 37 in tRNAs. m2A2503 modification seems to play a crucial role in the proofreading step occurring at the peptidyl transferase center and thus would serve to optimize ribosomal fidelity. The polypeptide is Dual-specificity RNA methyltransferase RlmN (Saccharophagus degradans (strain 2-40 / ATCC 43961 / DSM 17024)).